The following is a 450-amino-acid chain: MIANETIAAIATPPGIGGVCIIRISGAQAHAIAVNITHKKNLVPRQAILSHFYDLSGEQIDQGIVLYFPAPHSFTGEDVVELQGHGGIAVAHALLSATLDFGARLAHAGEFTQRAFLNDKLDLAQAEAVADLIHARSQDALRAANRSLQGVFSQKIDALADELLRLRVYVEASLDFSEDEIDFLGEGKIREKLVDSLQKTQQLLAQSQQGQLLNDGIHLVLAGKPNAGKSSLLNALLGEERAIVTPQAGTTRDIVREDWIIDGIPVHLSDTAGLRESQDLVEQEGIRRSFDAVKRADIVLLLADGSARDNDARAEFVSLQEELHQLAPHAQFLVVYNKADLVDEQTAGDGLWISAKTGAGIEILLKKIATLAGKNQHEETVFIARKRHIHALESVEAHLQRALQQLEQFFVAELVAEELRLAHLALGTITGTVSSDDLLDEIFSGFCIGK.

(6S)-5-formyl-5,6,7,8-tetrahydrofolate is bound by residues Arg-23, Glu-81, and Lys-120. Positions 216-373 (GIHLVLAGKP…LLKKIATLAG (158 aa)) constitute a TrmE-type G domain. GTP is bound by residues 226-231 (NAGKSS), 245-251 (TPQAGTT), 270-273 (DTAG), and 337-340 (NKAD). Mg(2+)-binding residues include Ser-230 and Thr-251. Residue Lys-450 coordinates (6S)-5-formyl-5,6,7,8-tetrahydrofolate.

The protein belongs to the TRAFAC class TrmE-Era-EngA-EngB-Septin-like GTPase superfamily. TrmE GTPase family. As to quaternary structure, homodimer. Heterotetramer of two MnmE and two MnmG subunits. K(+) is required as a cofactor.

Its subcellular location is the cytoplasm. Functionally, exhibits a very high intrinsic GTPase hydrolysis rate. Involved in the addition of a carboxymethylaminomethyl (cmnm) group at the wobble position (U34) of certain tRNAs, forming tRNA-cmnm(5)s(2)U34. This Dichelobacter nodosus (strain VCS1703A) protein is tRNA modification GTPase MnmE.